Consider the following 1293-residue polypeptide: Phosphoribosylformylglycinamidine synthase (1293 aa).

ATP is bound by residues 305-316 (GAATGSGGEIRD) and Ala-676. The tract at residues 305–327 (GAATGSGGEIRDEGATGRGSKPK) is disordered. Residues Asp-677, Glu-716, Asn-720, and Asp-884 each coordinate Mg(2+). Ser-886 provides a ligand contact to ATP. The 254-residue stretch at 1040–1293 (MAILREQGVN…MFRNARVNLG (254 aa)) folds into the Glutamine amidotransferase type-1 domain. Residue Cys-1133 is the Nucleophile of the active site. Residues His-1258 and Glu-1260 contribute to the active site.

It in the N-terminal section; belongs to the FGAMS family. Monomer.

The protein localises to the cytoplasm. The catalysed reaction is N(2)-formyl-N(1)-(5-phospho-beta-D-ribosyl)glycinamide + L-glutamine + ATP + H2O = 2-formamido-N(1)-(5-O-phospho-beta-D-ribosyl)acetamidine + L-glutamate + ADP + phosphate + H(+). Its pathway is purine metabolism; IMP biosynthesis via de novo pathway; 5-amino-1-(5-phospho-D-ribosyl)imidazole from N(2)-formyl-N(1)-(5-phospho-D-ribosyl)glycinamide: step 1/2. Functionally, phosphoribosylformylglycinamidine synthase involved in the purines biosynthetic pathway. Catalyzes the ATP-dependent conversion of formylglycinamide ribonucleotide (FGAR) and glutamine to yield formylglycinamidine ribonucleotide (FGAM) and glutamate. The sequence is that of Phosphoribosylformylglycinamidine synthase from Shewanella sp. (strain MR-4).